The sequence spans 739 residues: Phosphoribosylformylglycinamidine synthase subunit PurL (739 aa).

His54 is a catalytic residue. ATP is bound by residues Tyr57 and Lys96. Residue Glu98 coordinates Mg(2+). Substrate contacts are provided by residues 99–102 (SHNH) and Arg121. Catalysis depends on His100, which acts as the Proton acceptor. Residue Asp122 coordinates Mg(2+). Gln245 lines the substrate pocket. Asp273 provides a ligand contact to Mg(2+). Residue 317–319 (ESQ) participates in substrate binding. Positions 500 and 537 each coordinate ATP. Position 538 (Asn538) interacts with Mg(2+). Position 540 (Ser540) interacts with substrate.

This sequence belongs to the FGAMS family. In terms of assembly, monomer. Part of the FGAM synthase complex composed of 1 PurL, 1 PurQ and 2 PurS subunits.

The protein localises to the cytoplasm. The enzyme catalyses N(2)-formyl-N(1)-(5-phospho-beta-D-ribosyl)glycinamide + L-glutamine + ATP + H2O = 2-formamido-N(1)-(5-O-phospho-beta-D-ribosyl)acetamidine + L-glutamate + ADP + phosphate + H(+). It functions in the pathway purine metabolism; IMP biosynthesis via de novo pathway; 5-amino-1-(5-phospho-D-ribosyl)imidazole from N(2)-formyl-N(1)-(5-phospho-D-ribosyl)glycinamide: step 1/2. Part of the phosphoribosylformylglycinamidine synthase complex involved in the purines biosynthetic pathway. Catalyzes the ATP-dependent conversion of formylglycinamide ribonucleotide (FGAR) and glutamine to yield formylglycinamidine ribonucleotide (FGAM) and glutamate. The FGAM synthase complex is composed of three subunits. PurQ produces an ammonia molecule by converting glutamine to glutamate. PurL transfers the ammonia molecule to FGAR to form FGAM in an ATP-dependent manner. PurS interacts with PurQ and PurL and is thought to assist in the transfer of the ammonia molecule from PurQ to PurL. The sequence is that of Phosphoribosylformylglycinamidine synthase subunit PurL from Bacillus cereus (strain ATCC 14579 / DSM 31 / CCUG 7414 / JCM 2152 / NBRC 15305 / NCIMB 9373 / NCTC 2599 / NRRL B-3711).